The chain runs to 664 residues: Serine/threonine-protein kinase PknD (664 aa).

The Cytoplasmic segment spans residues 1–381 (MSDAVPQVGS…PAGNKRKVWA (381 aa)). One can recognise a Protein kinase domain in the interval 15-276 (YQLLRLLGRG…DLAIAAHDAL (262 aa)). Residues 21 to 29 (LGRGGMGEV) and lysine 44 each bind ATP. Threonine 135 bears the Phosphothreonine; by autocatalysis mark. Aspartate 138 (proton acceptor) is an active-site residue. Phosphothreonine; by autocatalysis is present on residues threonine 169, threonine 171, threonine 173, and threonine 209. The interval 303–333 (TGLSQSESGIAGAGTGPPTPGAARWSPGDSA) is disordered. The chain crosses the membrane as a helical span at residues 382 to 402 (VVGAAAIVLVAIVAAAGYLVL). Over 403 to 664 (RPSWSPTQAS…GNDRVVKLTS (262 aa)) the chain is Extracellular. 6 NHL repeats span residues 414–456 (QTVL…LATG), 457–497 (STGT…LAAG), 498–539 (SNNQ…LAAG), 540–581 (SKTQ…LEAE), 582–623 (SNNQ…LLAG), and 624–664 (STTS…KLTS).

Belongs to the protein kinase superfamily. Ser/Thr protein kinase family. Homodimer. The extracellular domain interacts with host laminin. Autophosphorylated. Dephosphorylated by PstP.

It is found in the cell membrane. The enzyme catalyses L-seryl-[protein] + ATP = O-phospho-L-seryl-[protein] + ADP + H(+). It catalyses the reaction L-threonyl-[protein] + ATP = O-phospho-L-threonyl-[protein] + ADP + H(+). With respect to regulation, dimerization activates the kinase domain of unphosphorylated PknD via an allosteric mechanism, triggering autophosphorylation and phosphorylation of target proteins. Phosphorylated PknD is fully active even in the absence of dimerization. Its function is as follows. Part of a signaling pathway that enables adaptation to osmotic stress through cell wall remodeling and virulence factor production. In terms of biological role, key microbial factor required for central nervous system tuberculosis. Required for invasion of host brain endothelia, but not macrophages, lung epithelia or other endothelia. In Mycobacterium tuberculosis (strain CDC 1551 / Oshkosh), this protein is Serine/threonine-protein kinase PknD (pknD).